Here is a 219-residue protein sequence, read N- to C-terminus: Kappa-scoloptoxin(11)-Ss1a (219 aa).

The N-terminal stretch at 1-16 is a signal peptide; it reads MFYSHLLFFTFTFACS. The propeptide occupies 17 to 25; it reads SSLNRKTKR.

Contains 8 disulfide bonds. As to expression, expressed by the venom gland.

Its subcellular location is the secreted. Functionally, voltage-gated potassium channel inhibitor. The chain is Kappa-scoloptoxin(11)-Ss1a from Scolopendra dehaani (Thai centipede).